The chain runs to 269 residues: MNNQEAINALQMVRQANPLVHNITNVVVTNFTANGLLALGASPVMAYAKEEVADMAKIAGALVLNIGTLNPTEVEAMIIAGKAANEAGVPVIFDPVGAGATPYRTETARNIASAVQLSVIRGNAAEIANTIGESWTIKGVDAGEGSGDVVSLAKKAAKQLKTVVAITGKEDVVTDGNTTYIIRNGHPLLTKVTGTGCLLTSVIGAFAAVERDVLKAAAAALVIYGVAAEIAAKNAGDEGPGSFQIAFLDALSRVGADEISRYGRIEQGE.

Met-45 provides a ligand contact to substrate. ATP contacts are provided by Arg-121 and Thr-167. Residue Gly-194 coordinates substrate.

It belongs to the Thz kinase family. Mg(2+) serves as cofactor.

It catalyses the reaction 5-(2-hydroxyethyl)-4-methylthiazole + ATP = 4-methyl-5-(2-phosphooxyethyl)-thiazole + ADP + H(+). Its pathway is cofactor biosynthesis; thiamine diphosphate biosynthesis; 4-methyl-5-(2-phosphoethyl)-thiazole from 5-(2-hydroxyethyl)-4-methylthiazole: step 1/1. Its function is as follows. Catalyzes the phosphorylation of the hydroxyl group of 4-methyl-5-beta-hydroxyethylthiazole (THZ). This Geobacillus sp. (strain WCH70) protein is Hydroxyethylthiazole kinase.